A 344-amino-acid polypeptide reads, in one-letter code: Outer membrane protein assembly factor BamC (344 aa).

The N-terminal stretch at 1 to 24 (MAYSVQKSRLAKVAGVSLVLLLAA) is a signal peptide. Residue Cys25 is the site of N-palmitoyl cysteine attachment. Cys25 carries S-diacylglycerol cysteine lipidation.

Belongs to the BamC family. In terms of assembly, part of the Bam complex, which is composed of the outer membrane protein BamA, and four lipoproteins BamB, BamC, BamD and BamE. Forms a subcomplex with BamD and BamE. The Bam complex has the shape of a hat, with the BamA beta-barrel crown in the outer membrane and the periplasmic brim formed by the BamA POTRA domains and the 4 lipoproteins.

The protein localises to the cell outer membrane. Functionally, part of the outer membrane protein assembly complex (Bam), which is involved in assembly and insertion of beta-barrel proteins into the outer membrane. Nonessential member of the complex that stabilizes the interaction between the essential proteins BamA and BamD. Efficient substrate folding and insertion into the outer membrane requires all 5 subunits. A lateral gate may open between the first and last strands of the BamA beta-barrel that allows substrate to insert into the outer membrane; comparison of the structures of complete and nearly complete Bam complexes show there is considerable movement of all 5 proteins. In Escherichia coli (strain K12), this protein is Outer membrane protein assembly factor BamC.